A 302-amino-acid chain; its full sequence is Paired immunoglobulin-like type 2 receptor alpha (302 aa).

The first 31 residues, 1 to 31, serve as a signal peptide directing secretion; that stretch reads MALLISLPGGTPAMAQILLLLSSACLHAGNS. The Extracellular portion of the chain corresponds to 32-198; the sequence is ERSNRKNGFG…GGLDLQTTVG (167 aa). N-linked (GlcNAc...) asparagine glycans are attached at residues asparagine 90 and asparagine 107. Residues 199–219 traverse the membrane as a helical segment; that stretch reads LATAAAVFLVGVLGLIVFLWW. Over 220–302 the chain is Cytoplasmic; it reads KRRRQGQKTK…ETVYSIVKAK (83 aa). Positions 228 to 248 are enriched in basic and acidic residues; it reads TKAEIPAREPLETSEKHESVG. The disordered stretch occupies residues 228 to 293; the sequence is TKAEIPAREP…LPVHGNPQEE (66 aa). Short sequence motifs (ITIM motif) lie at residues 265 to 270 and 294 to 299; these read IVYASI and TVYSIV. Residues 270–280 are compositionally biased toward polar residues; that stretch reads ISLSSPTSPGT.

In terms of assembly, interacts with CD99. Phosphorylated on tyrosine residues.

The protein resides in the membrane. Paired receptors consist of highly related activating and inhibitory receptors and are widely involved in the regulation of the immune system. Receptor for CD99 and PIANP. This chain is Paired immunoglobulin-like type 2 receptor alpha (Pilra), found in Mus musculus (Mouse).